We begin with the raw amino-acid sequence, 364 residues long: Alanine racemase (364 aa).

Lys-34 (proton acceptor; specific for D-alanine) is an active-site residue. Residue Lys-34 is modified to N6-(pyridoxal phosphate)lysine. Residue Arg-129 coordinates substrate. Tyr-259 acts as the Proton acceptor; specific for L-alanine in catalysis. Met-307 is a binding site for substrate.

Belongs to the alanine racemase family. It depends on pyridoxal 5'-phosphate as a cofactor.

The catalysed reaction is L-alanine = D-alanine. It functions in the pathway amino-acid biosynthesis; D-alanine biosynthesis; D-alanine from L-alanine: step 1/1. In terms of biological role, catalyzes the interconversion of L-alanine and D-alanine. May also act on other amino acids. This Coxiella burnetii (strain Dugway 5J108-111) protein is Alanine racemase (alr).